We begin with the raw amino-acid sequence, 116 residues long: Putative serine proteinase inhibitor 2 homolog first part (116 aa).

The protein belongs to the serpin family. Poxviruses subfamily.

The polypeptide is Putative serine proteinase inhibitor 2 homolog first part (Vaccinia virus (strain Copenhagen) (VACV)).